A 163-amino-acid polypeptide reads, in one-letter code: Phosphopantetheine adenylyltransferase (163 aa).

Residue T11 participates in substrate binding. ATP-binding positions include 11–12 (TF) and H19. Positions 43, 75, and 89 each coordinate substrate. Residues 90–92 (GLR), E100, and 125–131 (YMFISAT) contribute to the ATP site.

Belongs to the bacterial CoaD family. As to quaternary structure, homohexamer. Mg(2+) is required as a cofactor.

The protein resides in the cytoplasm. The enzyme catalyses (R)-4'-phosphopantetheine + ATP + H(+) = 3'-dephospho-CoA + diphosphate. The protein operates within cofactor biosynthesis; coenzyme A biosynthesis; CoA from (R)-pantothenate: step 4/5. Reversibly transfers an adenylyl group from ATP to 4'-phosphopantetheine, yielding dephospho-CoA (dPCoA) and pyrophosphate. In Aromatoleum aromaticum (strain DSM 19018 / LMG 30748 / EbN1) (Azoarcus sp. (strain EbN1)), this protein is Phosphopantetheine adenylyltransferase.